The sequence spans 506 residues: Maturase K (506 aa).

It belongs to the intron maturase 2 family. MatK subfamily.

Its subcellular location is the plastid. It localises to the chloroplast. Its function is as follows. Usually encoded in the trnK tRNA gene intron. Probably assists in splicing its own and other chloroplast group II introns. In Trifolium subterraneum (Subterranean clover), this protein is Maturase K.